A 529-amino-acid chain; its full sequence is Probable biotin-dependent acyl-coenzyme A carboxylase beta2 subunit (529 aa).

A CoA carboxyltransferase N-terminal domain is found at 20–271 (MSGKLDEINA…IKQGPAPAPV (252 aa)). The CoA carboxyltransferase C-terminal domain maps to 270–520 (PVTEPLFDAE…SAIANGPIKG (251 aa)).

The protein belongs to the AccD/PCCB family. As to quaternary structure, the biotin-dependent acyl-CoA carboxylase complex is composed of an AccA protein, which contains the biotin carboxylase (BC) and biotin carboxyl carrier protein (BCCP) domains, and an AccD protein, which contains the carboxyl transferase (CT) domain.

Its function is as follows. Component of a biotin-dependent acyl-CoA carboxylase complex. This subunit transfers the CO2 from carboxybiotin to the CoA ester substrate. The sequence is that of Probable biotin-dependent acyl-coenzyme A carboxylase beta2 subunit (accD2) from Mycobacterium tuberculosis (strain ATCC 25618 / H37Rv).